A 578-amino-acid chain; its full sequence is Serine/threonine-protein kinase D6PKL3 (578 aa).

Over residues 1 to 24 (MDSSSSVVYVGSSSKSRNFQSKSK) the composition is skewed to low complexity. The segment at 1-64 (MDSSSSVVYV…EVIESSVSSV (64 aa)) is disordered. Positions 25 to 34 (GSITSFSIDS) are enriched in polar residues. Positions 53-64 (SPEVIESSVSSV) are enriched in low complexity. One can recognise a Protein kinase domain in the interval 182–516 (FKLIKKLGGG…ATEIKQHPFF (335 aa)). ATP-binding positions include 188 to 196 (LGGGDIGNV) and lysine 211. Residue aspartate 307 is the Proton acceptor of the active site. The tract at residues 325–426 (DFDLSLRCAV…VGTHEYLAPE (102 aa)) is activation loop. The PIF motif lies at 575 to 578 (IDFF).

Belongs to the protein kinase superfamily. AGC Ser/Thr protein kinase family. Expressed predominantly in root tissue with lower levels found in leaf, stem, seed and flower.

It localises to the cell membrane. The enzyme catalyses L-seryl-[protein] + ATP = O-phospho-L-seryl-[protein] + ADP + H(+). It carries out the reaction L-threonyl-[protein] + ATP = O-phospho-L-threonyl-[protein] + ADP + H(+). Its function is as follows. Protein kinase that regulates the auxin transport activity of PIN auxin efflux facilitators by direct phosphorylation. D6PK-mediated PIN phosphorylation promotes auxin transport in the hypocotyl and this is a prerequisite for PHOT1-dependent hypocotyl bending. The protein is Serine/threonine-protein kinase D6PKL3 (D6PKL3) of Arabidopsis thaliana (Mouse-ear cress).